A 368-amino-acid polypeptide reads, in one-letter code: tRNA-specific 2-thiouridylase MnmA (368 aa).

ATP-binding positions include 11-18 (GMSGGVDS) and Met-37. The interval 97-99 (NPD) is interaction with target base in tRNA. Cys-102 (nucleophile) is an active-site residue. The cysteines at positions 102 and 199 are disulfide-linked. Gly-127 is a binding site for ATP. Residues 149-151 (KDQ) form an interaction with tRNA region. The active-site Cysteine persulfide intermediate is Cys-199. Residues 311 to 312 (RY) form an interaction with tRNA region.

It belongs to the MnmA/TRMU family. Interacts with TusE.

The protein localises to the cytoplasm. The enzyme catalyses S-sulfanyl-L-cysteinyl-[protein] + uridine(34) in tRNA + AH2 + ATP = 2-thiouridine(34) in tRNA + L-cysteinyl-[protein] + A + AMP + diphosphate + H(+). In terms of biological role, catalyzes the 2-thiolation of uridine at the wobble position (U34) of tRNA(Lys), tRNA(Glu) and tRNA(Gln), leading to the formation of s(2)U34, the first step of tRNA-mnm(5)s(2)U34 synthesis. Sulfur is provided by IscS, via a sulfur-relay system. Binds ATP and its substrate tRNAs. This is tRNA-specific 2-thiouridylase MnmA from Citrobacter koseri (strain ATCC BAA-895 / CDC 4225-83 / SGSC4696).